A 101-amino-acid polypeptide reads, in one-letter code: NAD(P)H-quinone oxidoreductase subunit 4L, chloroplastic (101 aa).

Helical transmembrane passes span 2-22 (MLEH…YGLI), 32-52 (MCLE…SDLF), and 61-81 (IFSI…LAIV).

Belongs to the complex I subunit 4L family. As to quaternary structure, NDH is composed of at least 16 different subunits, 5 of which are encoded in the nucleus.

It is found in the plastid. The protein localises to the chloroplast thylakoid membrane. The catalysed reaction is a plastoquinone + NADH + (n+1) H(+)(in) = a plastoquinol + NAD(+) + n H(+)(out). The enzyme catalyses a plastoquinone + NADPH + (n+1) H(+)(in) = a plastoquinol + NADP(+) + n H(+)(out). Its function is as follows. NDH shuttles electrons from NAD(P)H:plastoquinone, via FMN and iron-sulfur (Fe-S) centers, to quinones in the photosynthetic chain and possibly in a chloroplast respiratory chain. The immediate electron acceptor for the enzyme in this species is believed to be plastoquinone. Couples the redox reaction to proton translocation, and thus conserves the redox energy in a proton gradient. This is NAD(P)H-quinone oxidoreductase subunit 4L, chloroplastic from Nandina domestica (Heavenly bamboo).